Here is a 457-residue protein sequence, read N- to C-terminus: Siroheme synthase (457 aa).

The interval 1-204 is precorrin-2 dehydrogenase /sirohydrochlorin ferrochelatase; the sequence is MDHLPIFCQL…NDQKAITETT (204 aa). NAD(+) is bound by residues 22–23 and 43–44; these read DV and LA. Phosphoserine is present on Ser128. Residues 216 to 457 are uroporphyrinogen-III C-methyltransferase; sequence GEVVLVGAGP…RDKLNWFSNH (242 aa). Pro225 serves as a coordination point for S-adenosyl-L-methionine. Asp248 functions as the Proton acceptor in the catalytic mechanism. The Proton donor role is filled by Lys270. S-adenosyl-L-methionine is bound by residues 301–303, Ile306, 331–332, Met382, and Gly411; these read GGD and TA.

The protein in the N-terminal section; belongs to the precorrin-2 dehydrogenase / sirohydrochlorin ferrochelatase family. This sequence in the C-terminal section; belongs to the precorrin methyltransferase family.

It carries out the reaction uroporphyrinogen III + 2 S-adenosyl-L-methionine = precorrin-2 + 2 S-adenosyl-L-homocysteine + H(+). The catalysed reaction is precorrin-2 + NAD(+) = sirohydrochlorin + NADH + 2 H(+). The enzyme catalyses siroheme + 2 H(+) = sirohydrochlorin + Fe(2+). It functions in the pathway cofactor biosynthesis; adenosylcobalamin biosynthesis; precorrin-2 from uroporphyrinogen III: step 1/1. Its pathway is cofactor biosynthesis; adenosylcobalamin biosynthesis; sirohydrochlorin from precorrin-2: step 1/1. It participates in porphyrin-containing compound metabolism; siroheme biosynthesis; precorrin-2 from uroporphyrinogen III: step 1/1. The protein operates within porphyrin-containing compound metabolism; siroheme biosynthesis; siroheme from sirohydrochlorin: step 1/1. It functions in the pathway porphyrin-containing compound metabolism; siroheme biosynthesis; sirohydrochlorin from precorrin-2: step 1/1. In terms of biological role, multifunctional enzyme that catalyzes the SAM-dependent methylations of uroporphyrinogen III at position C-2 and C-7 to form precorrin-2 via precorrin-1. Then it catalyzes the NAD-dependent ring dehydrogenation of precorrin-2 to yield sirohydrochlorin. Finally, it catalyzes the ferrochelation of sirohydrochlorin to yield siroheme. In Escherichia fergusonii (strain ATCC 35469 / DSM 13698 / CCUG 18766 / IAM 14443 / JCM 21226 / LMG 7866 / NBRC 102419 / NCTC 12128 / CDC 0568-73), this protein is Siroheme synthase.